The primary structure comprises 323 residues: MFKRLRRLRSSENLRAMVRETRLNINDFIAPLFVIESDSGIKNEISSMPGVYQMSIEPLLKECEELVGLGIKAVLLFGIPKHKDATGSHALNKDHIVAKATREIKKRFKDLIVIADLCFCEYTDHGHCGILENASVSNDKTLKILNLQGLILAESGVDILAPSNMMDGNVLSLRKALDKAGYFHTPIMSYSTKFASSYYGPFRDVANSPPSFGDRKSYQMDYANQKEALLESLEDEKQGADILMVKPALAYLDIVKEIRDHTLLPLALYNVSGEYAMLKLAQKHNLINYESVLLETMTCFKRAGADMIISYHAKEVANLLQRN.

Cysteine 118, cysteine 120, and cysteine 128 together coordinate Zn(2+). The Schiff-base intermediate with substrate role is filled by lysine 193. Residues arginine 203 and arginine 215 each coordinate 5-aminolevulinate. Residue glutamate 231 coordinates Mg(2+). The active-site Schiff-base intermediate with substrate is the lysine 246. Serine 272 and tyrosine 311 together coordinate 5-aminolevulinate.

The protein belongs to the ALAD family. Homooctamer. It depends on Zn(2+) as a cofactor.

It carries out the reaction 2 5-aminolevulinate = porphobilinogen + 2 H2O + H(+). The protein operates within porphyrin-containing compound metabolism; protoporphyrin-IX biosynthesis; coproporphyrinogen-III from 5-aminolevulinate: step 1/4. In terms of biological role, catalyzes an early step in the biosynthesis of tetrapyrroles. Binds two molecules of 5-aminolevulinate per subunit, each at a distinct site, and catalyzes their condensation to form porphobilinogen. The polypeptide is Delta-aminolevulinic acid dehydratase (hemB) (Helicobacter pylori (strain J99 / ATCC 700824) (Campylobacter pylori J99)).